Consider the following 72-residue polypeptide: Beta-defensin 104A (72 aa).

The signal sequence occupies residues methionine 1–serine 22. 3 disulfide bridges follow: cysteine 30/cysteine 57, cysteine 37/cysteine 51, and cysteine 41/cysteine 58.

The protein belongs to the beta-defensin family.

The protein localises to the secreted. Has antimicrobial activity. The sequence is that of Beta-defensin 104A (DEFB104A) from Gorilla gorilla gorilla (Western lowland gorilla).